The sequence spans 204 residues: Imidazoleglycerol-phosphate dehydratase (204 aa).

Belongs to the imidazoleglycerol-phosphate dehydratase family.

It localises to the cytoplasm. The catalysed reaction is D-erythro-1-(imidazol-4-yl)glycerol 3-phosphate = 3-(imidazol-4-yl)-2-oxopropyl phosphate + H2O. The protein operates within amino-acid biosynthesis; L-histidine biosynthesis; L-histidine from 5-phospho-alpha-D-ribose 1-diphosphate: step 6/9. In Albidiferax ferrireducens (strain ATCC BAA-621 / DSM 15236 / T118) (Rhodoferax ferrireducens), this protein is Imidazoleglycerol-phosphate dehydratase.